A 243-amino-acid chain; its full sequence is Terpene cyclase dpasB (243 aa).

The next 7 helical transmembrane spans lie at 16 to 36 (VVWV…SNYI), 50 to 70 (MALM…FIYP), 79 to 99 (IHTL…RYGA), 112 to 132 (LPVI…AFAE), 141 to 161 (AVSG…QLLC), 172 to 189 (LWLA…PNML), and 207 to 227 (IWFL…LWYV).

This sequence belongs to the paxB family.

The protein localises to the membrane. Its pathway is secondary metabolite biosynthesis; terpenoid biosynthesis. Terpene cyclase; part of the gene cluster that mediates the biosynthesis of the diterpenoid pyrones subglutinols A and B. The first step of the pathway is the synthesis of the alpha-pyrone moiety by the polyketide synthase dpasA via condensation of one acetyl-CoA starter unit with 3 malonyl-CoA units and 2 methylations. The alpha-pyrone is then combined with geranylgeranyl pyrophosphate (GGPP) formed by the GGPP synthase dpasD through the action of the prenyltransferase dpasC to yield a linear alpha-pyrone diterpenoid. Subsequent steps in the diterpenoid pyrone biosynthetic pathway involve the decalin core formation, which is initiated by the epoxidation of the C10-C11 olefin by the FAD-dependent oxidoreductase dpasE, and is followed by a cyclization cascade catalyzed by the terpene cyclase dpasB. The FAD-linked oxidoreductase dpasF is then involved in tetrahydrofuran (THF) ring formation at the C5 unit to complete the formation of subglutinols A and B. DpasF possesses also an additional catalytic ability of multi-step oxidations to generate a new DDP analog with an enone system at the C5 named FDDP A. The sequence is that of Terpene cyclase dpasB from Apiospora sacchari (Arthrinium sacchari).